Consider the following 207-residue polypeptide: Ribonuclease HII (207 aa).

An RNase H type-2 domain is found at 18-207 (TYLSGSDEAG…PIKKISKETS (190 aa)). 3 residues coordinate a divalent metal cation: D24, E25, and D116.

It belongs to the RNase HII family. Requires Mn(2+) as cofactor. The cofactor is Mg(2+).

The protein resides in the cytoplasm. It catalyses the reaction Endonucleolytic cleavage to 5'-phosphomonoester.. Endonuclease that specifically degrades the RNA of RNA-DNA hybrids. The polypeptide is Ribonuclease HII (Mycoplasma mycoides subsp. mycoides SC (strain CCUG 32753 / NCTC 10114 / PG1)).